A 241-amino-acid polypeptide reads, in one-letter code: Leucyl/phenylalanyl-tRNA--protein transferase (241 aa).

It belongs to the L/F-transferase family.

The protein resides in the cytoplasm. The catalysed reaction is N-terminal L-lysyl-[protein] + L-leucyl-tRNA(Leu) = N-terminal L-leucyl-L-lysyl-[protein] + tRNA(Leu) + H(+). The enzyme catalyses N-terminal L-arginyl-[protein] + L-leucyl-tRNA(Leu) = N-terminal L-leucyl-L-arginyl-[protein] + tRNA(Leu) + H(+). It catalyses the reaction L-phenylalanyl-tRNA(Phe) + an N-terminal L-alpha-aminoacyl-[protein] = an N-terminal L-phenylalanyl-L-alpha-aminoacyl-[protein] + tRNA(Phe). Its function is as follows. Functions in the N-end rule pathway of protein degradation where it conjugates Leu, Phe and, less efficiently, Met from aminoacyl-tRNAs to the N-termini of proteins containing an N-terminal arginine or lysine. This is Leucyl/phenylalanyl-tRNA--protein transferase from Neisseria meningitidis serogroup A / serotype 4A (strain DSM 15465 / Z2491).